The primary structure comprises 169 residues: N-alpha-acetyltransferase 50 (169 aa).

Residues 6 to 155 (IELGDVTPHN…DAHVLQKNLK (150 aa)) form the N-acetyltransferase domain. Residue T12 is modified to Phosphothreonine. A substrate-binding site is contributed by Y31. An N6-acetyllysine mark is found at K34 and K37. The active site involves Y73. M75 lines the substrate pocket. Acetyl-CoA is bound at residue 77–90 (LGCLAPYRRLGIGT). Y110 is modified (phosphotyrosine). H112 is an active-site residue. 117–126 (NESAIDFYRK) contacts CoA. A substrate region spans residues 138–141 (YYKR). K140 is subject to N6-acetyllysine.

It belongs to the acetyltransferase family. GNAT subfamily. In terms of assembly, component of the N-terminal acetyltransferase E (NatE) complex at least composed of NAA10, NAA15 and NAA50. Interacts with NAA10. Interacts with NAA15. Predominantly interacts with NAA15 in the N-terminal acetyltransferase A complex (NatA complex); the interactions reduce the acetylation activity of the NatA complex. Component of the N-terminal acetyltransferase E (NatE)/HYPK complex at least composed of NAA10, NAA15, NAA50 and HYPK. Within the complex interacts with NAA15. Its capacity to interact with the NatA complex is reduced by HYPK. Interacts with NAA35.

It localises to the cytoplasm. Its subcellular location is the nucleus. The enzyme catalyses N-terminal L-methionyl-L-alanyl-[protein] + acetyl-CoA = N-terminal N(alpha)-acetyl-L-methionyl-L-alanyl-[protein] + CoA + H(+). It catalyses the reaction N-terminal L-methionyl-L-seryl-[protein] + acetyl-CoA = N-terminal N(alpha)-acetyl-L-methionyl-L-seryl-[protein] + CoA + H(+). It carries out the reaction N-terminal L-methionyl-L-valyl-[protein] + acetyl-CoA = N-terminal N(alpha)-acetyl-L-methionyl-L-valyl-[protein] + CoA + H(+). The catalysed reaction is N-terminal L-methionyl-L-threonyl-[protein] + acetyl-CoA = N-terminal N(alpha)-acetyl-L-methionyl-L-threonyl-[protein] + CoA + H(+). The enzyme catalyses N-terminal L-methionyl-L-lysyl-[protein] + acetyl-CoA = N-terminal N(alpha)-acetyl-L-methionyl-L-lysyl-[protein] + CoA + H(+). It catalyses the reaction N-terminal L-methionyl-L-leucyl-[protein] + acetyl-CoA = N-terminal N(alpha)-acetyl-L-methionyl-L-leucyl-[protein] + CoA + H(+). It carries out the reaction N-terminal L-methionyl-L-phenylalanyl-[protein] + acetyl-CoA = N-terminal N(alpha)-acetyl-L-methionyl-L-phenylalanyl-[protein] + CoA + H(+). The catalysed reaction is N-terminal L-methionyl-L-tyrosyl-[protein] + acetyl-CoA = N-terminal N(alpha)-acetyl-L-methionyl-L-tyrosyl-[protein] + CoA + H(+). Its function is as follows. N-alpha-acetyltransferase that acetylates the N-terminus of proteins that retain their initiating methionine. Has a broad substrate specificity: able to acetylate the initiator methionine of most peptides, except for those with a proline in second position. Also displays N-epsilon-acetyltransferase activity by mediating acetylation of the side chain of specific lysines on proteins. Autoacetylates in vivo. The relevance of N-epsilon-acetyltransferase activity is however unclear: able to acetylate H4 in vitro, but this result has not been confirmed in vivo. Component of N-alpha-acetyltransferase complexes containing NAA10 and NAA15, which has N-alpha-acetyltransferase activity. Does not influence the acetyltransferase activity of NAA10. However, it negatively regulates the N-alpha-acetyltransferase activity of the N-terminal acetyltransferase A complex (also called the NatA complex). The multiprotein complexes probably constitute the major contributor for N-terminal acetylation at the ribosome exit tunnel, with NAA10 acetylating all amino termini that are devoid of methionine and NAA50 acetylating other peptides. Required for sister chromatid cohesion during mitosis by promoting binding of CDCA5/sororin to cohesin: may act by counteracting the function of NAA10. The polypeptide is N-alpha-acetyltransferase 50 (Mus musculus (Mouse)).